We begin with the raw amino-acid sequence, 61 residues long: Large ribosomal subunit protein eL24 (61 aa).

Cys-7, Cys-10, Cys-33, and Cys-37 together coordinate Zn(2+). The C4-type zinc-finger motif lies at 7–37; the sequence is CSFCGHEIPPGTGLMYVRNDGTMLWFCSSKC.

Belongs to the eukaryotic ribosomal protein eL24 family. In terms of assembly, part of the 50S ribosomal subunit. Forms a cluster with proteins L3 and L14. The cofactor is Zn(2+).

Its function is as follows. Binds to the 23S rRNA. This is Large ribosomal subunit protein eL24 from Saccharolobus islandicus (strain M.16.27) (Sulfolobus islandicus).